We begin with the raw amino-acid sequence, 458 residues long: 3-isopropylmalate dehydratase large subunit (458 aa).

3 residues coordinate [4Fe-4S] cluster: Cys337, Cys397, and Cys400.

This sequence belongs to the aconitase/IPM isomerase family. LeuC type 1 subfamily. As to quaternary structure, heterodimer of LeuC and LeuD. The cofactor is [4Fe-4S] cluster.

It carries out the reaction (2R,3S)-3-isopropylmalate = (2S)-2-isopropylmalate. It functions in the pathway amino-acid biosynthesis; L-leucine biosynthesis; L-leucine from 3-methyl-2-oxobutanoate: step 2/4. Its function is as follows. Catalyzes the isomerization between 2-isopropylmalate and 3-isopropylmalate, via the formation of 2-isopropylmaleate. This is 3-isopropylmalate dehydratase large subunit from Leuconostoc mesenteroides subsp. mesenteroides (strain ATCC 8293 / DSM 20343 / BCRC 11652 / CCM 1803 / JCM 6124 / NCDO 523 / NBRC 100496 / NCIMB 8023 / NCTC 12954 / NRRL B-1118 / 37Y).